The primary structure comprises 1138 residues: Nuclear pore complex-interacting protein family member B13 (1138 aa).

A helical membrane pass occupies residues 73–93 (VVITLWIVYLWVSLLKTIFWS). 2 disordered regions span residues 242 to 578 (RMGH…NIKT) and 747 to 1138 (ERLR…RRLS). A compositionally biased stretch (polar residues) spans 252-263 (QQHSITDNSLSL). Residues 349–359 (PLPPSAPPSAP) show a composition bias toward pro residues. 10 stretches are compositionally biased toward basic and acidic residues: residues 406-416 (DNIKTPAERLR), 448-458 (DNIKTPAERLR), 490-500 (DNIKTPAERLR), 532-542 (DNIKTPAERLR), 782-792 (DNIKTPAERLR), 824-834 (DNIKTPAERLR), 866-876 (DNIKTPAERLR), 908-918 (DNIKTPAERLR), 950-960 (DNIKTPAERLR), and 992-1002 (DNIKTPAERLR).

This sequence belongs to the NPIP family.

The protein resides in the membrane. This is Nuclear pore complex-interacting protein family member B13 from Homo sapiens (Human).